A 252-amino-acid chain; its full sequence is MKTVTVKDLVIGTGAPKIIVSLMAKDIASVKSEALAYREADFDILEWRVDHYADLSNVESVIAAAKILRETMPEKPLLFTFRSAKEGGEQAISTEAYIALNRAAIDSGLVDMIDLELFTGDDQVKETVAYAHAHDVKVVMSNHDFHKTPEAEEIIARLRKMQSFDADIPKIALMPQSTSDVLTLLAATLEMQEQYADRPIITMSMAKTGVISRLAGEVFGSAATFGAVKKASAPGQISVNDLRTVLTILHQA.

3-dehydroquinate-binding positions include Ser-21, 46-48 (EWR), and Arg-82. Catalysis depends on His-143, which acts as the Proton donor/acceptor. Lys-170 (schiff-base intermediate with substrate) is an active-site residue. 3 residues coordinate 3-dehydroquinate: Arg-213, Ser-232, and Gln-236.

This sequence belongs to the type-I 3-dehydroquinase family. In terms of assembly, homodimer.

The enzyme catalyses 3-dehydroquinate = 3-dehydroshikimate + H2O. The protein operates within metabolic intermediate biosynthesis; chorismate biosynthesis; chorismate from D-erythrose 4-phosphate and phosphoenolpyruvate: step 3/7. Its function is as follows. Involved in the third step of the chorismate pathway, which leads to the biosynthesis of aromatic amino acids. Catalyzes the cis-dehydration of 3-dehydroquinate (DHQ) and introduces the first double bond of the aromatic ring to yield 3-dehydroshikimate. In Escherichia coli O127:H6 (strain E2348/69 / EPEC), this protein is 3-dehydroquinate dehydratase.